We begin with the raw amino-acid sequence, 358 residues long: MKVGVALSGGVDSAVALYLLLKEGHEVKAFHMKTKEDEFFIKKEIKKKVCCSPSDTADAMRIAHFLGVEIEIVDVKEIFREKVIEPFKRDLLKGLTPNPCAHCNRFVKFGYLMDYVLNQGFDAFASGHYARIEFSEKYGRKVIKKGVDLKKDQSYFLARIEPWRIERLIFPNGIYTKEEIRKIAEEAGIHVAKKQESQDVCFIPDGSIENFLKDEGITLKDGDIITPEGEVVGRHFGYPLYTIGQRKGFKIEKFGRRYYVRGKIPEKNVVVVSDLEDVFFSGLIAEDPVWHVEVPEEFRCVCRVRKKSEEAPAVVKVKDNEVEVSFEKKVFAVTPGQIAAFYDGDTLLGGAIIKEGIR.

ATP contacts are provided by residues A6–S13 and M32. The active-site Nucleophile is C103. A disulfide bond links C103 and C201. G127 contributes to the ATP binding site. The segment at K151–Q153 is interaction with tRNA. The active-site Cysteine persulfide intermediate is C201.

This sequence belongs to the MnmA/TRMU family.

It is found in the cytoplasm. It carries out the reaction S-sulfanyl-L-cysteinyl-[protein] + uridine(34) in tRNA + AH2 + ATP = 2-thiouridine(34) in tRNA + L-cysteinyl-[protein] + A + AMP + diphosphate + H(+). Its function is as follows. Catalyzes the 2-thiolation of uridine at the wobble position (U34) of tRNA, leading to the formation of s(2)U34. This is tRNA-specific 2-thiouridylase MnmA from Thermotoga maritima (strain ATCC 43589 / DSM 3109 / JCM 10099 / NBRC 100826 / MSB8).